A 122-amino-acid chain; its full sequence is UPF0231 protein VV1_1657 (122 aa).

The protein belongs to the UPF0231 family.

The chain is UPF0231 protein VV1_1657 from Vibrio vulnificus (strain CMCP6).